The sequence spans 207 residues: Protein 6b (207 aa).

The disordered stretch occupies residues 160–183 (GNYTEEGEDDDDEMDDEGEAGGAE). Positions 164–178 (EEGEDDDDEMDDEGE) are enriched in acidic residues.

Its function is as follows. Involved in tumor formation and increases auxin and cytokinin effects in host plants. The chain is Protein 6b (6b) from Agrobacterium tumefaciens (strain Ach5).